The sequence spans 467 residues: Putative vacuolar protein sorting-associated protein TDA6 (467 aa).

A helical membrane pass occupies residues 8-28 (ILLWFLIVDLSVIRALVLPPL). Asn61, Asn124, and Asn141 each carry an N-linked (GlcNAc...) asparagine glycan.

The protein belongs to the VPS62 family.

It localises to the membrane. Its function is as follows. Involved in vacuolar protein sorting. The protein is Putative vacuolar protein sorting-associated protein TDA6 (TDA6) of Saccharomyces cerevisiae (strain ATCC 204508 / S288c) (Baker's yeast).